Reading from the N-terminus, the 387-residue chain is Galactokinase (387 aa).

36–39 (EHTD) is a substrate binding site. Residues Ser-70 and 125–131 (GAGLSSS) each bind ATP. Mg(2+)-binding residues include Ser-131 and Glu-163. Asp-175 (proton acceptor) is an active-site residue. Tyr-227 is a substrate binding site.

Belongs to the GHMP kinase family. GalK subfamily.

The protein resides in the cytoplasm. The catalysed reaction is alpha-D-galactose + ATP = alpha-D-galactose 1-phosphate + ADP + H(+). The protein operates within carbohydrate metabolism; galactose metabolism. Functionally, catalyzes the transfer of the gamma-phosphate of ATP to D-galactose to form alpha-D-galactose-1-phosphate (Gal-1-P). The sequence is that of Galactokinase from Streptomyces coelicolor (strain ATCC BAA-471 / A3(2) / M145).